We begin with the raw amino-acid sequence, 662 residues long: MLFNCFGILALLQILPALAYPPCREQMSDPYEFGESDLMRPGMHDTPLSLMQKREALAISLSKRDSVGSYAPYNVTCPSDYMLRPASDGISSGEQSFIDKRIPKINTQMRSFISNTGLDVDVNSVINDSDGPRLGLAFSGGGLRAMVHGGGVLNAFDSRNGNGSSLAGILQSAMYIAGLSGGSWLVGSVAVNNFANITYLRDNVWNLEHSVFAPHGDNVVENLAYYDDLDDEIDQKKDAGFDTSLTDLWGRALSRKLVDATQGGPNITFSSIRNQTWFQNADYPYPIIISDSRLEEEKAIPANTSIFEFTPYEFGTWDNGIKAFLPMEYVGTHLKNGVPPDHKCIRNYDNAGFVMGTSATLFNTFLLEWSQEVTSNSTLYDIIHKVFEKLSEDQNDIAPYPNPYQNFTTTNTTVKNPFERFDTIDLVDGGEDDENIPIWPLLHPQRFVDVIFAVDATYDDSNGWPDGSSIVTTYERIITYNANKSVDVRGFPYIPDEDTIISLGLNTHPTFFGCDGRNTTAGNHTVDNNTPPLLVYFPNYPWVYYSNISTFTMSMNDTLSSGILENAALSATQNNSDSFAVCLACAMIQRSLERKNMSTPSQCSSCFEQYCWNGTTVNNPSAVSNYAPTVLSASTTSGTSSVRAKPIVFYLFASLLTVSLLL.

The first 19 residues, 1–19 (MLFNCFGILALLQILPALA), serve as a signal peptide directing secretion. N-linked (GlcNAc...) asparagine glycans are attached at residues N74, N127, N162, N196, N266, N274, N303, N376, N406, N411, N483, N518, N523, N547, N556, N574, N596, and N613. In terms of domain architecture, PLA2c spans 76–617 (TCPSDYMLRP…EQYCWNGTTV (542 aa)).

This sequence belongs to the lysophospholipase family.

It localises to the secreted. It carries out the reaction a 1-acyl-sn-glycero-3-phosphocholine + H2O = sn-glycerol 3-phosphocholine + a fatty acid + H(+). Catalyzes the release of fatty acids from lysophospholipids. The protein is Probable lysophospholipase 3 (plb3) of Schizosaccharomyces pombe (strain 972 / ATCC 24843) (Fission yeast).